A 114-amino-acid chain; its full sequence is Pole-localizer protein TmaR (114 aa).

Residues 70-111 adopt a coiled-coil conformation; the sequence is RDDYESRVDDYTIRNAELSKQRREASTKMKEQKKAHAELLKN. Positions 89–114 are disordered; it reads KQRREASTKMKEQKKAHAELLKNAEK.

This sequence belongs to the pole-localizer TmaR family.

The protein localises to the cytoplasm. Its function is as follows. Pole-localizer protein involved in the regulation of several cellular processes. The polypeptide is Pole-localizer protein TmaR (Haemophilus influenzae (strain 86-028NP)).